Consider the following 338-residue polypeptide: Methionine synthase (338 aa).

Residues His210, Cys212, Glu234, and Cys294 each contribute to the Zn(2+) site.

This sequence belongs to the archaeal MetE family. Zn(2+) serves as cofactor.

The protein operates within amino-acid biosynthesis; L-methionine biosynthesis via de novo pathway. In terms of biological role, catalyzes the transfer of a methyl group to L-homocysteine resulting in methionine formation. The physiological methyl donor is unknown. The chain is Methionine synthase from Pyrococcus abyssi (strain GE5 / Orsay).